Reading from the N-terminus, the 104-residue chain is N(4)-acetylcytidine amidohydrolase (104 aa).

An ASCH domain is found at Ile-6–Gln-94. Lys-21 serves as the catalytic Proton acceptor. Thr-24 serves as the catalytic Nucleophile. Residue Glu-74 is the Proton donor of the active site.

The protein belongs to the N(4)-acetylcytidine amidohydrolase family.

It carries out the reaction N(4)-acetylcytidine + H2O = cytidine + acetate + H(+). It catalyses the reaction N(4)-acetyl-2'-deoxycytidine + H2O = 2'-deoxycytidine + acetate + H(+). The enzyme catalyses N(4)-acetylcytosine + H2O = cytosine + acetate + H(+). Functionally, catalyzes the hydrolysis of N(4)-acetylcytidine (ac4C). The protein is N(4)-acetylcytidine amidohydrolase (yqfB) of Salmonella dublin (strain CT_02021853).